Consider the following 314-residue polypeptide: Cathepsin L 1 (314 aa).

The signal sequence occupies residues 1 to 24; sequence MMLLGASLYLNNTQEVSDEIDTAN. Positions 25–109 are cleaved as a propeptide — activation peptide; that stretch reads LYANWKMKYN…NAANSNFQYK (85 aa). 3 disulfide bridges follow: Cys132-Cys175, Cys166-Cys207, and Cys259-Cys302. Cys135 is a catalytic residue. Residues His265 and Asn282 contribute to the active site.

Belongs to the peptidase C1 family.

The protein resides in the secreted. The enzyme catalyses Specificity close to that of papain. As compared to cathepsin B, cathepsin L exhibits higher activity toward protein substrates, but has little activity on Z-Arg-Arg-NHMec, and no peptidyl-dipeptidase activity.. May be involved in extracellular digestion. The chain is Cathepsin L 1 from Paramecium tetraurelia.